Reading from the N-terminus, the 64-residue chain is p7b (64 aa).

Residues 1-12 (MECVCVDSSWPQ) lie on the Cytoplasmic side of the membrane. Residues 13 to 30 (WLRNLILGILISSILFIL) form a helical; Signal-anchor for type II membrane protein membrane-spanning segment. Residues 31–64 (TKTQDTVAVYHEPSVYSIDQTQKFQKIDIHNGGK) lie on the Lumenal side of the membrane.

This sequence belongs to the gammacarmovirus double gene block protein 2 family.

The protein resides in the host endoplasmic reticulum membrane. Functionally, required for cell-to-cell movement of virions in the host plant together with p7a. This Maize chlorotic mottle virus (isolate United States/Kansas/1987) (MCMV) protein is p7b.